A 283-amino-acid polypeptide reads, in one-letter code: UPF0276 protein Anae109_1558 (283 aa).

It belongs to the UPF0276 family.

The chain is UPF0276 protein Anae109_1558 from Anaeromyxobacter sp. (strain Fw109-5).